Reading from the N-terminus, the 139-residue chain is MKKGTVLNSELSALISRLGHTDSVTVGDAGLPVPDGIQRIDLALTHGIPRFMQVIETMTAEMQVERAVLAQEMVEANPDIHRQLVTWLQRLAQTQGNAIHIDYVSHGQFKALSGESKAIVRSGECSPYANVLLYAGVTF.

His20 functions as the Proton donor in the catalytic mechanism. Substrate-binding positions include Asp28, His106, and 128 to 130 (YAN).

This sequence belongs to the RbsD / FucU family. RbsD subfamily. Homodecamer.

The protein resides in the cytoplasm. The enzyme catalyses beta-D-ribopyranose = beta-D-ribofuranose. The protein operates within carbohydrate metabolism; D-ribose degradation; D-ribose 5-phosphate from beta-D-ribopyranose: step 1/2. Its function is as follows. Catalyzes the interconversion of beta-pyran and beta-furan forms of D-ribose. The sequence is that of D-ribose pyranase from Edwardsiella ictaluri (strain 93-146).